Reading from the N-terminus, the 250-residue chain is F-box only protein 17 (250 aa).

An F-box domain is found at 15–62; it reads HMALAELPPELLLQVLSHVPPRALVTRCRPVCRAWRDLVDGPSVWLLQ. The FBA domain maps to 99–250; the sequence is FCLLAPLGRN…GLLQGLSRLH (152 aa).

In terms of assembly, part of a SCF (SKP1-cullin-F-box) protein ligase complex. Interacts with SKP1 and CUL1.

In terms of biological role, substrate-recognition component of the SCF (SKP1-CUL1-F-box protein)-type E3 ubiquitin ligase complex. Able to recognize and bind denatured glycoproteins, which are modified with complex-type oligosaccharides. Also recognizes sulfated glycans. Does not bind high-mannose glycoproteins. This Rattus norvegicus (Rat) protein is F-box only protein 17 (Fbxo17).